A 192-amino-acid chain; its full sequence is Akirin-1 (192 aa).

Residues 17–71 (LLSPGSPKRRRCAPLPGPTPGLRPPDAEPPPPFQTQTPPQSLQQPAPPGSERRLP) are disordered. At Ser22 the chain carries Phosphoserine. A Nuclear localization signal motif is present at residues 23 to 28 (PKRRRC). A compositionally biased stretch (pro residues) spans 31–49 (LPGPTPGLRPPDAEPPPPF). Positions 50-60 (QTQTPPQSLQQ) are enriched in low complexity. Thr72 carries the post-translational modification Phosphothreonine. Polar residues predominate over residues 104–122 (ASESQPHSSALTAPSSPGS). Residues 104–127 (ASESQPHSSALTAPSSPGSSWMKK) form a disordered region. The SYVS motif signature appears at 189-192 (SYVS).

The protein belongs to the akirin family. In terms of tissue distribution, widely expressed with the highest expression in heart, liver, placenta and peripheral blood leukocytes.

The protein localises to the nucleus. In terms of biological role, molecular adapter that acts as a bridge between proteins, and which is involved skeletal muscle development. Functions as a signal transducer for MSTN during skeletal muscle regeneration and myogenesis. May regulate chemotaxis of both macrophages and myoblasts by reorganising actin cytoskeleton, leading to more efficient lamellipodia formation via a PI3 kinase dependent pathway. In contrast to AKIRIN2, not involved in nuclear import of proteasomes. This chain is Akirin-1, found in Homo sapiens (Human).